The following is a 338-amino-acid chain: Methionine import ATP-binding protein MetN (338 aa).

An ABC transporter domain is found at 2–241 (ISLDGIRKVF…PKEHITKEFV (240 aa)). An ATP-binding site is contributed by 38 to 45 (GYSGAGKS).

This sequence belongs to the ABC transporter superfamily. Methionine importer (TC 3.A.1.24) family. As to quaternary structure, the complex is composed of two ATP-binding proteins (MetN), two transmembrane proteins (MetI) and a solute-binding protein (MetQ).

The protein resides in the cell membrane. It carries out the reaction L-methionine(out) + ATP + H2O = L-methionine(in) + ADP + phosphate + H(+). The enzyme catalyses D-methionine(out) + ATP + H2O = D-methionine(in) + ADP + phosphate + H(+). In terms of biological role, part of the ABC transporter complex MetNIQ involved in methionine import. Responsible for energy coupling to the transport system. This chain is Methionine import ATP-binding protein MetN, found in Halalkalibacterium halodurans (strain ATCC BAA-125 / DSM 18197 / FERM 7344 / JCM 9153 / C-125) (Bacillus halodurans).